Reading from the N-terminus, the 379-residue chain is Cytochrome b (379 aa).

Transmembrane regions (helical) follow at residues 33 to 53 (FGSL…FLAM), 77 to 98 (WLIR…FIHV), 113 to 133 (WNIG…GYVL), and 178 to 198 (FFAF…VHLL). Heme b is bound by residues histidine 83 and histidine 97. Residues histidine 182 and histidine 196 each contribute to the heme b site. Residue histidine 201 participates in a ubiquinone binding. A run of 4 helical transmembrane segments spans residues 226 to 246 (IKDL…ALFF), 288 to 308 (LGGV…PLLN), 320 to 340 (VTQT…WIGG), and 347 to 367 (FTMI…ILIP).

The protein belongs to the cytochrome b family. The cytochrome bc1 complex contains 11 subunits: 3 respiratory subunits (MT-CYB, CYC1 and UQCRFS1), 2 core proteins (UQCRC1 and UQCRC2) and 6 low-molecular weight proteins (UQCRH/QCR6, UQCRB/QCR7, UQCRQ/QCR8, UQCR10/QCR9, UQCR11/QCR10 and a cleavage product of UQCRFS1). This cytochrome bc1 complex then forms a dimer. The cofactor is heme b.

Its subcellular location is the mitochondrion inner membrane. Its function is as follows. Component of the ubiquinol-cytochrome c reductase complex (complex III or cytochrome b-c1 complex) that is part of the mitochondrial respiratory chain. The b-c1 complex mediates electron transfer from ubiquinol to cytochrome c. Contributes to the generation of a proton gradient across the mitochondrial membrane that is then used for ATP synthesis. This chain is Cytochrome b (MT-CYB), found in Akodon philipmyersi (Myers' grass mouse).